Reading from the N-terminus, the 369-residue chain is 4-hydroxy-3-methylbut-2-en-1-yl diphosphate synthase (flavodoxin) (369 aa).

[4Fe-4S] cluster contacts are provided by Cys270, Cys273, Cys305, and Glu312.

It belongs to the IspG family. [4Fe-4S] cluster is required as a cofactor.

The catalysed reaction is (2E)-4-hydroxy-3-methylbut-2-enyl diphosphate + oxidized [flavodoxin] + H2O + 2 H(+) = 2-C-methyl-D-erythritol 2,4-cyclic diphosphate + reduced [flavodoxin]. The protein operates within isoprenoid biosynthesis; isopentenyl diphosphate biosynthesis via DXP pathway; isopentenyl diphosphate from 1-deoxy-D-xylulose 5-phosphate: step 5/6. Converts 2C-methyl-D-erythritol 2,4-cyclodiphosphate (ME-2,4cPP) into 1-hydroxy-2-methyl-2-(E)-butenyl 4-diphosphate. This Pseudomonas syringae pv. tomato (strain ATCC BAA-871 / DC3000) protein is 4-hydroxy-3-methylbut-2-en-1-yl diphosphate synthase (flavodoxin).